The chain runs to 466 residues: Asparagine--tRNA ligase (466 aa).

It belongs to the class-II aminoacyl-tRNA synthetase family. As to quaternary structure, homodimer.

The protein localises to the cytoplasm. It catalyses the reaction tRNA(Asn) + L-asparagine + ATP = L-asparaginyl-tRNA(Asn) + AMP + diphosphate + H(+). The sequence is that of Asparagine--tRNA ligase from Aliivibrio fischeri (strain ATCC 700601 / ES114) (Vibrio fischeri).